Consider the following 241-residue polypeptide: Thiamine import ATP-binding protein ThiQ (241 aa).

Residues 7–235 form the ABC transporter domain; it reads IRLSDVRFSY…AGPEALRHYI (229 aa). Residue 37–44 coordinates ATP; that stretch reads GPSGSGKS.

The protein belongs to the ABC transporter superfamily. Thiamine importer (TC 3.A.1.19.1) family. The complex is composed of two ATP-binding proteins (ThiQ), two transmembrane proteins (ThiP) and a solute-binding protein (ThiB).

It is found in the cell inner membrane. The catalysed reaction is thiamine(out) + ATP + H2O = thiamine(in) + ADP + phosphate + H(+). Part of the ABC transporter complex ThiBPQ involved in thiamine import. Responsible for energy coupling to the transport system. The sequence is that of Thiamine import ATP-binding protein ThiQ from Brucella abortus biovar 1 (strain 9-941).